The primary structure comprises 437 residues: Bifunctional protein GlmU (437 aa).

The segment at 1-223 (MHNTAVILAA…WDECRGVNSR (223 aa)) is pyrophosphorylase. Residues 8–11 (LAAG), Lys22, Gln70, 75–76 (GT), 96–98 (YGD), Gly135, Glu149, Asn164, and Asn221 each bind UDP-N-acetyl-alpha-D-glucosamine. Mg(2+) is bound at residue Asp98. Mg(2+) is bound at residue Asn221. The tract at residues 224 to 244 (AELAAAEAAMQSRLRAAALAA) is linker. Residues 245-437 (GVTMTAPETV…AELRMTKGKR (193 aa)) form an N-acetyltransferase region. Arg310 and Lys328 together coordinate UDP-N-acetyl-alpha-D-glucosamine. The Proton acceptor role is filled by His340. Positions 343 and 354 each coordinate UDP-N-acetyl-alpha-D-glucosamine. Acetyl-CoA is bound by residues Ala357, 363-364 (NY), Ser382, Ala400, and Arg417.

In the N-terminal section; belongs to the N-acetylglucosamine-1-phosphate uridyltransferase family. The protein in the C-terminal section; belongs to the transferase hexapeptide repeat family. In terms of assembly, homotrimer. Mg(2+) is required as a cofactor.

Its subcellular location is the cytoplasm. It carries out the reaction alpha-D-glucosamine 1-phosphate + acetyl-CoA = N-acetyl-alpha-D-glucosamine 1-phosphate + CoA + H(+). The catalysed reaction is N-acetyl-alpha-D-glucosamine 1-phosphate + UTP + H(+) = UDP-N-acetyl-alpha-D-glucosamine + diphosphate. The protein operates within nucleotide-sugar biosynthesis; UDP-N-acetyl-alpha-D-glucosamine biosynthesis; N-acetyl-alpha-D-glucosamine 1-phosphate from alpha-D-glucosamine 6-phosphate (route II): step 2/2. Its pathway is nucleotide-sugar biosynthesis; UDP-N-acetyl-alpha-D-glucosamine biosynthesis; UDP-N-acetyl-alpha-D-glucosamine from N-acetyl-alpha-D-glucosamine 1-phosphate: step 1/1. It participates in bacterial outer membrane biogenesis; LPS lipid A biosynthesis. Catalyzes the last two sequential reactions in the de novo biosynthetic pathway for UDP-N-acetylglucosamine (UDP-GlcNAc). The C-terminal domain catalyzes the transfer of acetyl group from acetyl coenzyme A to glucosamine-1-phosphate (GlcN-1-P) to produce N-acetylglucosamine-1-phosphate (GlcNAc-1-P), which is converted into UDP-GlcNAc by the transfer of uridine 5-monophosphate (from uridine 5-triphosphate), a reaction catalyzed by the N-terminal domain. The polypeptide is Bifunctional protein GlmU (Acidiphilium cryptum (strain JF-5)).